We begin with the raw amino-acid sequence, 645 residues long: Zinc finger and SCAN domain-containing protein 2 (645 aa).

Disordered stretches follow at residues 1-25, 37-75, and 193-230; these read MMAA…EEDR, DDSW…GPQG, and EMPE…HGEV. The SCAN box domain maps to 59 to 132; that stretch reads SAGKGSPQEE…ALVEDLTQTL (74 aa). Positions 199 to 214 are enriched in basic and acidic residues; the sequence is SAQHSDGESDFERDAG. 14 consecutive C2H2-type zinc fingers follow at residues 253–275, 281–303, 309–331, 337–359, 365–387, 393–415, 421–443, 449–471, 477–499, 505–527, 533–555, 561–583, 589–611, and 617–639; these read YECP…ERTH, YKCD…QTTH, YKCR…QRIH, FQCA…QRTH, YSCP…QGIH, YECK…QRIH, YKCT…RRTH, YQCS…RRTH, YKCG…QGMH, YECL…QRIH, YKCS…QQTH, YKCL…QRAH, YRCP…QRIH, and YKCP…QRTH.

It belongs to the krueppel C2H2-type zinc-finger protein family.

It localises to the nucleus. Its function is as follows. May be involved in transcriptional regulation during the post-meiotic stages of spermatogenesis. The polypeptide is Zinc finger and SCAN domain-containing protein 2 (ZSCAN2) (Pongo abelii (Sumatran orangutan)).